The sequence spans 289 residues: 33 kDa chaperonin (289 aa).

2 disulfide bridges follow: Cys-230/Cys-232 and Cys-263/Cys-266.

The protein belongs to the HSP33 family. Post-translationally, under oxidizing conditions two disulfide bonds are formed involving the reactive cysteines. Under reducing conditions zinc is bound to the reactive cysteines and the protein is inactive.

The protein localises to the cytoplasm. In terms of biological role, redox regulated molecular chaperone. Protects both thermally unfolding and oxidatively damaged proteins from irreversible aggregation. Plays an important role in the bacterial defense system toward oxidative stress. The chain is 33 kDa chaperonin from Shigella flexneri serotype 5b (strain 8401).